The chain runs to 375 residues: Lipid droplet hydrolase 1 (375 aa).

Positions 88-358 (VFVFVPGLAG…CSHNLCFDRP (271 aa)) constitute an AB hydrolase-1 domain. Catalysis depends on serine 177, which acts as the Charge relay system. The Microbody targeting signal motif lies at 373-375 (SKL).

It belongs to the AB hydrolase superfamily. Lipase family.

The protein resides in the lipid droplet. It carries out the reaction a triacylglycerol + H2O = a diacylglycerol + a fatty acid + H(+). In terms of biological role, serine hydrolase required for the maintenance of steady state level of non-polar and polar lipids of lipid droplets and thus plays a role in maintaining the lipids homeostasis. Exhibits both esterase and triacylglycerol lipase activity. This is Lipid droplet hydrolase 1 from Saccharomyces cerevisiae (strain ATCC 204508 / S288c) (Baker's yeast).